Consider the following 771-residue polypeptide: Ribonucleoside-diphosphate reductase large subunit (771 aa).

The ATP-cone domain maps to 1 to 92 (MFVIKRNGYK…VSNLHKETKK (92 aa)). ATP is bound by residues 5–6 (KR), 11–17 (ENVMFDK), Thr-53, Asp-57, and Lys-88. GDP contacts are provided by Ser-202 and Ser-217. DTTP contacts are provided by residues 226-228 (DSI), Lys-243, and Arg-256. Asn-427 serves as a coordination point for GDP. The active-site Proton acceptor is the Asn-427. The Cysteine radical intermediate role is filled by Cys-429. GDP contacts are provided by residues Glu-431 and 603–606 (TAST). Glu-431 (proton acceptor) is an active-site residue.

It belongs to the ribonucleoside diphosphate reductase large chain family. In terms of assembly, interacts with RNR2/OPG047 subunit. Mg(2+) serves as cofactor.

It catalyses the reaction a 2'-deoxyribonucleoside 5'-diphosphate + [thioredoxin]-disulfide + H2O = a ribonucleoside 5'-diphosphate + [thioredoxin]-dithiol. In terms of biological role, ribonucleoside-diphosphate reductase holoenzyme provides the precursors necessary for viral DNA synthesis. Allows virus growth in non-dividing cells. Catalyzes the biosynthesis of deoxyribonucleotides from the corresponding ribonucleotides. This Homo sapiens (Human) protein is Ribonucleoside-diphosphate reductase large subunit (OPG080).